The chain runs to 365 residues: Gibberellin 20 oxidase 1-B (365 aa).

Positions 199 to 299 constitute a Fe2OG dioxygenase domain; that stretch reads GNDSIMRLNY…RKSLAFFLCP (101 aa). Fe cation-binding residues include H224, D226, and H280. Residue R290 is part of the active site.

This sequence belongs to the iron/ascorbate-dependent oxidoreductase family. GA20OX subfamily. The cofactor is Fe cation. L-ascorbate is required as a cofactor. As to expression, not detected in nodes and the ear of the elongating stem.

It catalyses the reaction gibberellin A12 + 2 2-oxoglutarate + 3 O2 + H(+) = gibberellin A9 + 2 succinate + 3 CO2 + 2 H2O. It carries out the reaction gibberellin A53 + 2 2-oxoglutarate + 3 O2 + H(+) = gibberellin A20 + 2 succinate + 3 CO2 + 2 H2O. In terms of biological role, key oxidase enzyme in the biosynthesis of gibberellin that catalyzes the conversion of GA12 and GA53 to GA9 and GA20 respectively, via a three-step oxidation at C-20 of the GA skeleton. The polypeptide is Gibberellin 20 oxidase 1-B (GA20ox1B) (Triticum aestivum (Wheat)).